Reading from the N-terminus, the 304-residue chain is Large ribosomal subunit protein uL18y (304 aa).

This sequence belongs to the universal ribosomal protein uL18 family. As to quaternary structure, component of the large ribosomal subunit (LSU).

It localises to the cytoplasm. The protein resides in the nucleus. Its function is as follows. Component of the ribosome, a large ribonucleoprotein complex responsible for the synthesis of proteins in the cell. The small ribosomal subunit (SSU) binds messenger RNAs (mRNAs) and translates the encoded message by selecting cognate aminoacyl-transfer RNA (tRNA) molecules. The large subunit (LSU) contains the ribosomal catalytic site termed the peptidyl transferase center (PTC), which catalyzes the formation of peptide bonds, thereby polymerizing the amino acids delivered by tRNAs into a polypeptide chain. The nascent polypeptides leave the ribosome through a tunnel in the LSU and interact with protein factors that function in enzymatic processing, targeting, and the membrane insertion of nascent chains at the exit of the ribosomal tunnel. This Oryza sativa subsp. japonica (Rice) protein is Large ribosomal subunit protein uL18y (RPL5B).